Consider the following 756-residue polypeptide: Rab11 family-interacting protein 3 (756 aa).

The span at 1 to 24 (MASAPPASPPGSEPPGPDPEPGGP) shows a compositional bias: pro residues. Positions 1 to 204 (MASAPPASPP…SEPVGSQEDG (204 aa)) are disordered. The tract at residues 2 to 435 (ASAPPASPPG…RLSSKKVARY (434 aa)) is important for binding to DYNC1LI1. The span at 27–39 (PGAAQLAPGPAEL) shows a compositional bias: low complexity. Ser-52 is subject to Phosphoserine. The segment covering 53 to 68 (PGLDEPAPGAAADGGA) has biased composition (low complexity). The segment covering 84 to 94 (DPGPSAPPPRS) has biased composition (pro residues). Ser-102 is modified (phosphoserine; by CDK1). 2 EF-hand domains span residues 202–237 (EDGPRLRAVFDALDGDGDGFVRIEDFIQFATVYGAE) and 234–269 (YGAEQVKDLTKYLDPSGLGVISFEDFYQGITAIRNG). Residues Asp-215, Asp-217, Asp-219, Asp-226, Asp-247, Ser-249, and Asp-258 each coordinate Ca(2+). Phosphoserine occurs at positions 281, 348, 488, 538, 647, and 648. The interval 484-588 (GEQHSRLRQE…LLDEIESLTL (105 aa)) is ARF-binding domain (ABD). Positions 485–694 (EQHSRLRQEN…NGQIITLSIQ (210 aa)) form a coiled coil. The segment at 645-664 (RSSSMGLQEYHSRARESELE) is disordered. Residues 654-664 (YHSRARESELE) are compositionally biased toward basic and acidic residues. Residues 694 to 756 (QGAKSLFSTA…ETNPSILEVK (63 aa)) form the FIP-RBD domain.

Homodimer. Interacts with RAB11A; the interaction is direct and is required for the recruitment to endosomes. Interacts with RAB11B. Forms a ternary complex with RAB11A and dynein intermediate chain DYNC1LI1; RAB11FIP3 links RAB11A to dynein and the interaction regulates endocytic trafficking. Interacts with dynein intermediate chain and dynactin (DCTN1); the interaction activates dynein processivity. Interacts with ARF6 and EXOC7; the interaction serves for recruitment and tethering of recycling endosomes-derived vesicles to the cleavage furrow/midbody. Interacts with RACGAP1/MgcRacGAP; the interaction occurs at late telophase and is required for recruitment and tethering of recycling endosomes-derived vesicles to the cleavage furrow/midbody. Forms a complex with RAB11A and Rabin8/RAB3IP, probably a heterohexamer with two of each protein subunit, where RAB3IP and RAB11FIP3 simultaneously bind to RAB11A; the complex promotes preciliary trafficking. Forms a complex containing RAB11A, ASAP1, RAB3IP, RAP11FIP3 and ARF4; the complex promotes preciliary trafficking; the complex binds to RHO in photoreceptor cells and promotes RHO ciliary transport. Interacts with RAB11FIP4. Interacts with RAB25. Post-translationally, phosphorylated at Ser-102 by CDK1 during metaphase, and dephosphorylated as cells enter telophase.

The protein resides in the endosome membrane. Its subcellular location is the recycling endosome membrane. It localises to the cytoplasm. It is found in the cytoskeleton. The protein localises to the microtubule organizing center. The protein resides in the centrosome. Its subcellular location is the cleavage furrow. It localises to the midbody. It is found in the golgi apparatus membrane. The protein localises to the golgi apparatus. The protein resides in the trans-Golgi network membrane. In terms of biological role, downstream effector molecule for Rab11 GTPase which is involved in endocytic trafficking, cytokinesis and intracellular ciliogenesis by participating in membrane delivery. Recruited by Rab11 to endosomes where it links Rab11 to dynein motor complex. The functional Rab11-RAB11FIP3-dynein complex regulates the movement of peripheral sorting endosomes (SE) along microtubule tracks toward the microtubule organizing center/centrosome, generating the endocytic recycling compartment (ERC) during interphase of cell cycle. Facilitates the interaction between dynein and dynactin and activates dynein processivity. Binding with ASAP1 is needed to regulate the pericentrosomal localization of recycling endosomes. The Rab11-RAB11FIP3 complex is also implicated in the transport during telophase of vesicles derived from recycling endosomes to the cleavage furrow via centrosome-anchored microtubules, where the vesicles function to deliver membrane during late cytokinesis and abscission. The recruitment of Rab11-RAB11FIP3-containing endosomes to the cleavage furrow and tethering to the midbody is co-mediated by RAB11FIP3 interaction with ARF6-exocyst and RACGAP1-MKLP1 tethering complexes. Also involved in the Rab11-Rabin8-Rab8 ciliogenesis cascade by facilitating the orderly assembly of a ciliary targeting complex containing Rab11, ASAP1, Rabin8/RAB3IP, RAB11FIP3 and ARF4, which directs preciliary vesicle trafficking to mother centriole and ciliogenesis initiation. Also promotes the activity of Rab11 and ASAP1 in the ARF4-dependent Golgi-to-cilia transport of the sensory receptor rhodopsin. Competes with WDR44 for binding to Rab11, which controls intracellular ciliogenesis pathway. May play a role in breast cancer cell motility by regulating actin cytoskeleton. This chain is Rab11 family-interacting protein 3, found in Homo sapiens (Human).